The chain runs to 409 residues: Isovaleryl-CoA dehydrogenase, mitochondrial (409 aa).

Residues M1–L22 constitute a mitochondrion transit peptide. Residues L151–S160 and W184–T186 each bind FAD. S160 is a substrate binding site. Residues S206–K207, Y261, and D268–R271 each bind substrate. The active-site Proton acceptor is E270. Residues R296, Q307, and Q364–G368 each bind FAD. A391–G392 contacts substrate. T393–E395 lines the FAD pocket.

Belongs to the acyl-CoA dehydrogenase family. Homodimer. The cofactor is FAD.

It is found in the mitochondrion. The enzyme catalyses 3-methylbutanoyl-CoA + oxidized [electron-transfer flavoprotein] + H(+) = 3-methylbut-2-enoyl-CoA + reduced [electron-transfer flavoprotein]. It functions in the pathway amino-acid degradation; L-leucine degradation; (S)-3-hydroxy-3-methylglutaryl-CoA from 3-isovaleryl-CoA: step 1/3. The chain is Isovaleryl-CoA dehydrogenase, mitochondrial from Oryza sativa subsp. japonica (Rice).